A 187-amino-acid polypeptide reads, in one-letter code: UPF0232 protein MUL_0004 (187 aa).

A compositionally biased stretch (gly residues) spans 1–12 (MNGDGEQPGPGD). 2 disordered regions span residues 1 to 77 (MNGD…QPLG) and 166 to 187 (ASPS…DTYG). Over residues 14-30 (AARDELPSMDLVRRTLA) the composition is skewed to basic and acidic residues. The span at 31–55 (EARAAARARGQDPGRGFAAGPAPRR) shows a compositional bias: low complexity.

Belongs to the UPF0232 family.

In Mycobacterium ulcerans (strain Agy99), this protein is UPF0232 protein MUL_0004.